The chain runs to 66 residues: Beta-mammal toxin Cv5 (66 aa).

The region spanning 1–66 (KEGYIVNYYD…VWPLPKKKCN (66 aa)) is the LCN-type CS-alpha/beta domain. Disulfide bonds link C12/C65, C16/C41, C25/C46, and C29/C48.

As to expression, expressed by the venom gland.

It localises to the secreted. With respect to regulation, is susceptible to be neutralized by human antibodies scFvs 10FG2 and HV. Functionally, beta toxins bind voltage-independently at site-4 of sodium channels (Nav) and reduces peak current and shifts the voltage of activation toward more negative potentials thereby affecting sodium channel activation and promoting spontaneous and repetitive firing. This toxin is moderately toxic to mice. The polypeptide is Beta-mammal toxin Cv5 (Centruroides villegasi (Scorpion)).